Here is a 241-residue protein sequence, read N- to C-terminus: Carboxy-S-adenosyl-L-methionine synthase (241 aa).

Residues Y38, 63-65, 88-89, 116-117, N131, and R198 contribute to the S-adenosyl-L-methionine site; these read GCS, DN, and DI.

The protein belongs to the class I-like SAM-binding methyltransferase superfamily. Cx-SAM synthase family. In terms of assembly, homodimer.

It carries out the reaction prephenate + S-adenosyl-L-methionine = carboxy-S-adenosyl-L-methionine + 3-phenylpyruvate + H2O. Its function is as follows. Catalyzes the conversion of S-adenosyl-L-methionine (SAM) to carboxy-S-adenosyl-L-methionine (Cx-SAM). This is Carboxy-S-adenosyl-L-methionine synthase from Actinobacillus succinogenes (strain ATCC 55618 / DSM 22257 / CCUG 43843 / 130Z).